A 1140-amino-acid polypeptide reads, in one-letter code: uncharacterized protein (1140 aa).

The next 2 membrane-spanning stretches (helical) occupy residues F8 to T28 and I1098 to V1118.

It to M.pneumoniae MPN_375 (in the N-terminal section), M.pneumoniae MPN_374 (in the central section) and M.pneumoniae MPN_373 (in the C-terminal section).

The protein localises to the cell membrane. This is an uncharacterized protein from Mycoplasma pneumoniae (strain ATCC 29342 / M129 / Subtype 1) (Mycoplasmoides pneumoniae).